The chain runs to 361 residues: Phospho-N-acetylmuramoyl-pentapeptide-transferase (361 aa).

The next 10 helical transmembrane spans lie at 27 to 47 (ILASLTALIVGLLCGPLMIRW), 70 to 90 (GTPTMGGVLILLAITVSCLLW), 97 to 117 (SLWLVLLVTLANGLVGWVDDY), 134 to 154 (YFWQSVIALVAVSYLYWNASL), 167 to 187 (TVTWDLGVFFPVLAYFVIVGS), 199 to 219 (GLAIMPIVMVAGALGVFAYAS), 236 to 256 (TGELTIFCSSIVGAGLGFLWY), 263 to 283 (VFMGDVGSLALGAALGIVAIV), 288 to 308 (LVLLIMGGLFVIETLSVILQV), and 338 to 358 (KVIVRFWIITVVFVLCGLATL).

The protein belongs to the glycosyltransferase 4 family. MraY subfamily. It depends on Mg(2+) as a cofactor.

The protein resides in the cell inner membrane. The catalysed reaction is UDP-N-acetyl-alpha-D-muramoyl-L-alanyl-gamma-D-glutamyl-meso-2,6-diaminopimeloyl-D-alanyl-D-alanine + di-trans,octa-cis-undecaprenyl phosphate = di-trans,octa-cis-undecaprenyl diphospho-N-acetyl-alpha-D-muramoyl-L-alanyl-D-glutamyl-meso-2,6-diaminopimeloyl-D-alanyl-D-alanine + UMP. Its pathway is cell wall biogenesis; peptidoglycan biosynthesis. Its function is as follows. Catalyzes the initial step of the lipid cycle reactions in the biosynthesis of the cell wall peptidoglycan: transfers peptidoglycan precursor phospho-MurNAc-pentapeptide from UDP-MurNAc-pentapeptide onto the lipid carrier undecaprenyl phosphate, yielding undecaprenyl-pyrophosphoryl-MurNAc-pentapeptide, known as lipid I. The chain is Phospho-N-acetylmuramoyl-pentapeptide-transferase from Legionella pneumophila (strain Paris).